A 129-amino-acid chain; its full sequence is uncharacterized protein (129 aa).

3 helical membrane-spanning segments follow: residues 49–69 (LWSL…IVGV), 72–92 (FTIF…NLIF), and 101–118 (YFNC…NLLQ).

Its subcellular location is the membrane. This is an uncharacterized protein from Saccharomyces cerevisiae (strain ATCC 204508 / S288c) (Baker's yeast).